The sequence spans 365 residues: Popy Class I histocompatibility antigen, A-1 alpha chain (365 aa).

A signal peptide spans 1–24 (MAIMAPRTLLLLLSGALALTQTWA). The alpha-1 stretch occupies residues 25–114 (GSHSMRYFST…LRGYYNQSDG (90 aa)). The Extracellular portion of the chain corresponds to 25–308 (GSHSMRYFST…ELSSQPTIPI (284 aa)). Residue N110 is glycosylated (N-linked (GlcNAc...) asparagine). An alpha-2 region spans residues 115 to 206 (GSHTIQRMFG…ENGKETLQRT (92 aa)). 2 disulfides stabilise this stretch: C125-C188 and C227-C283. The interval 207–298 (DAPKTHMTHH…GLPEPLTLRW (92 aa)) is alpha-3. Positions 209 to 297 (PKTHMTHHPV…EGLPEPLTLR (89 aa)) constitute an Ig-like C1-type domain. The interval 299–308 (ELSSQPTIPI) is connecting peptide. The helical transmembrane segment at 309-332 (VGIIAGLVLLGAVITGAVVAAVMW) threads the bilayer. The Cytoplasmic portion of the chain corresponds to 333 to 365 (RRRNSDRKGGSYSQAASNDSAQGSDVSLTACKV). The segment at 340-365 (KGGSYSQAASNDSAQGSDVSLTACKV) is disordered. Residue S343 is modified to Phosphoserine. Residues 343-359 (SYSQAASNDSAQGSDVS) are compositionally biased toward polar residues. The residue at position 344 (Y344) is a Phosphotyrosine. Phosphoserine occurs at positions 345, 349, 352, 356, and 359.

Belongs to the MHC class I family. Heterodimer of an alpha chain and a beta chain (beta-2-microglobulin).

The protein localises to the membrane. Functionally, involved in the presentation of foreign antigens to the immune system. The chain is Popy Class I histocompatibility antigen, A-1 alpha chain from Pongo pygmaeus (Bornean orangutan).